The following is a 244-amino-acid chain: SURF1-like protein (244 aa).

2 helical membrane-spanning segments follow: residues 7-23 (ILTTFIILTSLGFWQLS) and 201-219 (YAITWFGLAIFLIVIYVIY).

The protein belongs to the SURF1 family.

The protein resides in the cell membrane. In Rickettsia prowazekii (strain Madrid E), this protein is SURF1-like protein.